An 876-amino-acid polypeptide reads, in one-letter code: Protein argonaute 17 (876 aa).

In terms of domain architecture, PAZ spans 246–338 (PVVDYVAQLL…LPLEVCKIAE (93 aa)). Residues 514 to 834 (LLIVILPNNN…LSSRARCYIK (321 aa)) enclose the Piwi domain. Residues 839–859 (GDSTSHTSLPSEEDSSAASET) form a disordered region.

Belongs to the argonaute family. Ago subfamily.

In terms of biological role, probably involved in the RNA silencing pathway. May bind to short RNAs such as microRNAs (miRNAs) or short interfering RNAs (siRNAs), and represses the translation of mRNAs which are complementary to them. In Oryza sativa subsp. japonica (Rice), this protein is Protein argonaute 17 (AGO17).